A 252-amino-acid chain; its full sequence is Endonuclease NucS (252 aa).

The protein belongs to the NucS endonuclease family.

The protein resides in the cytoplasm. In terms of biological role, cleaves both 3' and 5' ssDNA extremities of branched DNA structures. The polypeptide is Endonuclease NucS (Sulfurisphaera tokodaii (strain DSM 16993 / JCM 10545 / NBRC 100140 / 7) (Sulfolobus tokodaii)).